Reading from the N-terminus, the 229-residue chain is Ras-related protein Rab-33B (229 aa).

GTP is bound by residues Asn43, Val44, Gly45, Lys46, Thr47, Cys48, Thr62, and Thr65. Residue Thr47 coordinates Mg(2+). Positions 56-68 match the Switch 1 motif; sequence GRFPDRTEATIGV. Mg(2+)-binding residues include Thr65 and Asp88. Positions 89 to 108 match the Switch 2 motif; it reads TAGQERFRKSMVQHYYRNVH. GTP-binding residues include Gly91, Asn148, Lys149, Asp151, Ala179, and Lys180. Residues Cys227 and Cys229 are each lipidated (S-geranylgeranyl cysteine). A Cysteine methyl ester modification is found at Cys229.

This sequence belongs to the small GTPase superfamily. Rab family. Interacts (GTP- and GDP-bound forms) with ATG16L1; the complex consists of a tetramer where two RAB33B molecules bind independently one molecule of the ATG16L1 homodimer; the interaction promotes ATG12-ATG5-ATG16L1 complex recruitment to phagophores. Interacts with ATG16L2; however interaction is approximately hundred times lower than for ATG16L1. Interacts with RIC1 (via C-terminus domain); the interaction is direct with a preference for RAB33B-GTP. Interacts with RGP1. It depends on Mg(2+) as a cofactor. Prenylated.

It is found in the golgi apparatus membrane. The protein localises to the golgi apparatus. The protein resides in the cis-Golgi network. Its subcellular location is the preautophagosomal structure membrane. The enzyme catalyses GTP + H2O = GDP + phosphate + H(+). Regulated by guanine nucleotide exchange factors (GEFs) which promote the exchange of bound GDP for free GTP. Regulated by GTPase activating proteins (GAPs) such as SGSM2 which increase the GTP hydrolysis activity. Inhibited by GDP dissociation inhibitors (GDIs). Functionally, the small GTPases Rab are key regulators of intracellular membrane trafficking, from the formation of transport vesicles to their fusion with membranes. Rabs cycle between an inactive GDP-bound form and an active GTP-bound form that is able to recruit to membranes different sets of downstream effectors directly responsible for vesicle formation, movement, tethering and fusion. RAB33B acts, in coordination with RAB6A, to regulate intra-Golgi retrograde trafficking. Participates in autophagosome formation by recruiting the ATG12-ATG5-ATG16L1 complex to phagophores, probably in a nucleotide-independent manner. The protein is Ras-related protein Rab-33B (RAB33B) of Pongo abelii (Sumatran orangutan).